Consider the following 141-residue polypeptide: Putative pre-16S rRNA nuclease (141 aa).

Belongs to the YqgF nuclease family.

It localises to the cytoplasm. Functionally, could be a nuclease involved in processing of the 5'-end of pre-16S rRNA. The chain is Putative pre-16S rRNA nuclease from Vibrio parahaemolyticus serotype O3:K6 (strain RIMD 2210633).